The following is a 281-amino-acid chain: MTSPSSRSVRPGSVVRTVRRHRGGRSATVQDMVAAEMPVAFIYNGVPFAVMMATPEDLEDFALGFSLSEGIVDHAQDLRVIAVETFLEGASLQIEIPPERAAALHQRRRNLDGRSGCGVCGNESIEAVLRVPPVLQSSLQIDVDALAHALDALHARQPIAAQTGAVHAAGWADAQGNVQLVREDVGRHNALDKVIGALARARIDASHGFAVVTSRASFEMAMKAAQARIPLLAAISAPTALAISLAESAGLTLIGFARDHDCVVYSHPQRLDLGVAVGEPA.

The active-site Cysteine persulfide intermediate is the cysteine 117.

The protein belongs to the FdhD family.

The protein localises to the cytoplasm. Functionally, required for formate dehydrogenase (FDH) activity. Acts as a sulfur carrier protein that transfers sulfur from IscS to the molybdenum cofactor prior to its insertion into FDH. This chain is Sulfur carrier protein FdhD, found in Xanthomonas axonopodis pv. citri (strain 306).